The chain runs to 94 residues: Long neurotoxin LNTX1 (94 aa).

Positions 1–21 (MKILLLTLVVVTIMCLDLGYT) are cleaved as a signal peptide. 5 cysteine pairs are disulfide-bonded: Cys24–Cys43, Cys36–Cys64, Cys49–Cys53, Cys68–Cys79, and Cys80–Cys85.

The protein belongs to the three-finger toxin family. Long-chain subfamily. Type II alpha-neurotoxin sub-subfamily. As to quaternary structure, monomer. Expressed by the venom gland.

Its subcellular location is the secreted. Its function is as follows. Binds with high affinity to muscular (alpha-1/CHRNA1) and neuronal (alpha-7/CHRNA7) nicotinic acetylcholine receptor (nAChR) and inhibits acetylcholine from binding to the receptor, thereby impairing neuromuscular and neuronal transmission. Recombinant LNTX1 leads to a functional block of the muscle-type acetylcholine receptors. Has a cytotoxic activity. The chain is Long neurotoxin LNTX1 from Ophiophagus hannah (King cobra).